The primary structure comprises 429 residues: Ribosomal RNA small subunit methyltransferase B (429 aa).

S-adenosyl-L-methionine contacts are provided by residues 254-260 (CAAPGGK), aspartate 277, aspartate 303, and aspartate 322. Cysteine 375 (nucleophile) is an active-site residue.

This sequence belongs to the class I-like SAM-binding methyltransferase superfamily. RsmB/NOP family.

It is found in the cytoplasm. The catalysed reaction is cytidine(967) in 16S rRNA + S-adenosyl-L-methionine = 5-methylcytidine(967) in 16S rRNA + S-adenosyl-L-homocysteine + H(+). Its function is as follows. Specifically methylates the cytosine at position 967 (m5C967) of 16S rRNA. The polypeptide is Ribosomal RNA small subunit methyltransferase B (Escherichia coli O17:K52:H18 (strain UMN026 / ExPEC)).